The following is a 202-amino-acid chain: Probable septum site-determining protein MinC (202 aa).

Belongs to the MinC family. In terms of assembly, interacts with MinD and FtsZ.

In terms of biological role, cell division inhibitor that blocks the formation of polar Z ring septums. Rapidly oscillates between the poles of the cell to destabilize FtsZ filaments that have formed before they mature into polar Z rings. Prevents FtsZ polymerization. This Dictyoglomus turgidum (strain DSM 6724 / Z-1310) protein is Probable septum site-determining protein MinC.